We begin with the raw amino-acid sequence, 88 residues long: Small ribosomal subunit protein uS15 (88 aa).

Belongs to the universal ribosomal protein uS15 family. In terms of assembly, part of the 30S ribosomal subunit. Forms a bridge to the 50S subunit in the 70S ribosome, contacting the 23S rRNA.

Its function is as follows. One of the primary rRNA binding proteins, it binds directly to 16S rRNA where it helps nucleate assembly of the platform of the 30S subunit by binding and bridging several RNA helices of the 16S rRNA. Forms an intersubunit bridge (bridge B4) with the 23S rRNA of the 50S subunit in the ribosome. This chain is Small ribosomal subunit protein uS15, found in Borreliella afzelii (strain PKo) (Borrelia afzelii).